The chain runs to 148 residues: MGRFIFVSFSLLVVFFSLSGTEAGVCCPLGWSGYDQNCYKAFEELMNWADAEKFCTQQHKGSHLVSLHNIAEADFVVKKIVSVLKDGVIWMGLNDVWNECNWGWTDGAQLDYKAWNVESNCFIFKTADKPLVTYGLQWDTQFRLQEPG.

A signal peptide spans methionine 1–alanine 23. Residues tyrosine 34 to glycine 148 form the C-type lectin domain.

Belongs to the snaclec family. In terms of assembly, heterodimer; disulfide-linked. Post-translationally, contains disulfide bonds. As to expression, expressed by the venom gland.

It is found in the secreted. Interferes with one step of hemostasis (modulation of platelet aggregation, or coagulation cascade, for example). The protein is Snaclec 8 of Echis carinatus sochureki (Saw-scaled viper).